The chain runs to 430 residues: Lipoyl synthase, mitochondrial (430 aa).

A mitochondrion-targeting transit peptide spans 1–37; sequence MATSAGKLRTLYSAHSSLSSLPPSARPTLQLATLRSY. Polar residues predominate over residues 39–55; sequence TTTPHDSPIGNTSNTPP. Positions 39 to 59 are disordered; that stretch reads TTTPHDSPIGNTSNTPPTVKR. Residues Cys141, Cys146, Cys152, Cys172, Cys176, Cys179, and Ser387 each coordinate [4Fe-4S] cluster. The 222-residue stretch at 155-376 folds into the Radical SAM core domain; it reads GSSKSAATAT…KERALEMGFL (222 aa).

It belongs to the radical SAM superfamily. Lipoyl synthase family. Requires [4Fe-4S] cluster as cofactor.

Its subcellular location is the mitochondrion. It carries out the reaction [[Fe-S] cluster scaffold protein carrying a second [4Fe-4S](2+) cluster] + N(6)-octanoyl-L-lysyl-[protein] + 2 oxidized [2Fe-2S]-[ferredoxin] + 2 S-adenosyl-L-methionine + 4 H(+) = [[Fe-S] cluster scaffold protein] + N(6)-[(R)-dihydrolipoyl]-L-lysyl-[protein] + 4 Fe(3+) + 2 hydrogen sulfide + 2 5'-deoxyadenosine + 2 L-methionine + 2 reduced [2Fe-2S]-[ferredoxin]. It participates in protein modification; protein lipoylation via endogenous pathway; protein N(6)-(lipoyl)lysine from octanoyl-[acyl-carrier-protein]: step 2/2. Its function is as follows. Catalyzes the radical-mediated insertion of two sulfur atoms into the C-6 and C-8 positions of the octanoyl moiety bound to the lipoyl domains of lipoate-dependent enzymes, thereby converting the octanoylated domains into lipoylated derivatives. This chain is Lipoyl synthase, mitochondrial, found in Ajellomyces capsulatus (strain H143) (Darling's disease fungus).